We begin with the raw amino-acid sequence, 314 residues long: MMGQNQTSISDFLLLGLPIQPEQQNLCYALFLAMYLTTLLGNLLIIVLIRLDSHLHTPMYLFLSNLSFSDLCFSSVTIPKLLQNMQNQDPSIPYADCLTQMYFFLLFGDLESFLLVAMAYDRYVAICFPLHYTAIMSPMLCLSLVALSWVLTTFHAMLHTLLMARLCFCADNVIPHFFCDMSALLKLACSDTRVNEWVIFIMGGLIVVIPFLLILGSYARIVSSILKVPSSKGICKAFSTCGSHLSVVSLFYGTIIGLYLCPSANSSTLKETVMAMMYTVVTPMLNPFIYSLRNRDMKGALERVIXKRKNPFLL.

Over 1 to 25 the chain is Extracellular; sequence MMGQNQTSISDFLLLGLPIQPEQQN. Residue asparagine 5 is glycosylated (N-linked (GlcNAc...) asparagine). Residues 26–49 form a helical membrane-spanning segment; sequence LCYALFLAMYLTTLLGNLLIIVLI. The Cytoplasmic segment spans residues 50 to 57; that stretch reads RLDSHLHT. Residues 58-79 traverse the membrane as a helical segment; sequence PMYLFLSNLSFSDLCFSSVTIP. Over 80 to 100 the chain is Extracellular; the sequence is KLLQNMQNQDPSIPYADCLTQ. A disulfide bond links cysteine 97 and cysteine 189. A helical transmembrane segment spans residues 101–120; that stretch reads MYFFLLFGDLESFLLVAMAY. The Cytoplasmic portion of the chain corresponds to 121 to 139; sequence DRYVAICFPLHYTAIMSPM. A helical membrane pass occupies residues 140–158; it reads LCLSLVALSWVLTTFHAML. The Extracellular portion of the chain corresponds to 159–196; that stretch reads HTLLMARLCFCADNVIPHFFCDMSALLKLACSDTRVNE. The helical transmembrane segment at 197-219 threads the bilayer; that stretch reads WVIFIMGGLIVVIPFLLILGSYA. Residues 220-236 are Cytoplasmic-facing; sequence RIVSSILKVPSSKGICK. Residues 237-260 traverse the membrane as a helical segment; that stretch reads AFSTCGSHLSVVSLFYGTIIGLYL. Residues 261 to 272 lie on the Extracellular side of the membrane; the sequence is CPSANSSTLKET. The N-linked (GlcNAc...) asparagine glycan is linked to asparagine 265. Residues 273–292 form a helical membrane-spanning segment; it reads VMAMMYTVVTPMLNPFIYSL. The Cytoplasmic portion of the chain corresponds to 293–314; that stretch reads RNRDMKGALERVIXKRKNPFLL.

The protein belongs to the G-protein coupled receptor 1 family.

The protein resides in the cell membrane. Its function is as follows. Odorant receptor. This is Olfactory receptor 1E5 (OR1E5) from Pan troglodytes (Chimpanzee).